The primary structure comprises 440 residues: C4-dicarboxylate transport protein (440 aa).

The next 8 membrane-spanning stretches (helical) occupy residues 8–28 (LYLQVLLAVVLGALVGHLFPA), 40–60 (FIKLVKMLIAPIVFATVVTGI), 74–94 (LKGLLYFEVLTTVALAIGLVV), 147–167 (GDILQVLLFSVLFGAALAALK), 187–207 (IVGFVMRLAPVGAFGAMAFTV), 221–241 (LIACFYATSALFVVLMLGLVL), 288–308 (VVGLVVPMGYSFNLDGTSIYL), and 354–374 (AATLSAVGNIPVAGLALLLGV). A disordered region spans residues 419–440 (EEVEPANEPEPPAVPAGAGLHG).

It belongs to the dicarboxylate/amino acid:cation symporter (DAACS) (TC 2.A.23) family.

It localises to the cell inner membrane. Its function is as follows. Responsible for the transport of dicarboxylates such as succinate, fumarate, and malate from the periplasm across the membrane. This chain is C4-dicarboxylate transport protein, found in Anaeromyxobacter dehalogenans (strain 2CP-1 / ATCC BAA-258).